Reading from the N-terminus, the 1182-residue chain is IQ motif and SEC7 domain-containing protein 3 (1182 aa).

A coiled-coil region spans residues 20 to 56 (AIVQNQQSLIHTQRERIDELERRLDELSAENRSLWEH). 2 disordered regions span residues 62–157 (AQPP…ERPP) and 230–275 (AAGR…RQQP). Pro residues predominate over residues 63–78 (QPPPGLVPPSSAPLPA). 2 stretches are compositionally biased toward low complexity: residues 79-105 (APAT…AAAP) and 254-263 (GAGAASPRAG). Ser-259 carries the post-translational modification Phosphoserine. The region spanning 315–344 (SRRAACTIQTAFRQYQLSKNFEKIRNSLLE) is the IQ domain. Disordered stretches follow at residues 444-479 (AGPP…AHSG) and 521-616 (EPAA…ASAS). Positions 533–548 (SGREAPEAPAVGREDA) are enriched in basic and acidic residues. A compositionally biased stretch (low complexity) spans 555–569 (AEAAASGAADGATAP). Positions 572–581 (EEEEEEEETA) are enriched in acidic residues. The span at 598 to 616 (SSSSTSTKSAKSGSEASAS) shows a compositional bias: low complexity. The SEC7 domain occupies 644-837 (TLSTDTLRKR…VGIYERIQQK (194 aa)). A PH domain is found at 850 to 983 (TKVEKSIVGM…LKESIAEVTE (134 aa)). Residues 964-992 (SDEMQKFVEDLKESIAEVTELEQIRIEWE) adopt a coiled-coil conformation. 2 disordered regions span residues 1002 to 1090 (LSFK…PGTL) and 1121 to 1182 (YTSS…RSLV). A compositionally biased stretch (basic and acidic residues) spans 1022–1033 (AKREAALRERPA). Polar residues predominate over residues 1043–1052 (NRLQTSQHNS). The segment covering 1061–1087 (PVPPPDLQPSPPRQQTPPLPPPPPTPP) has biased composition (pro residues). Residues 1121–1132 (YTSSSSDSCGST) are compositionally biased toward low complexity. Residues 1147 to 1157 (PPLPPPPPPYN) show a composition bias toward pro residues.

The protein belongs to the BRAG family. As to quaternary structure, interacts with DLG1 and DLG4. Interacts with GPHN. In terms of tissue distribution, expressed specifically in the adult brain, predominantly in the cerebral cortex and the olfactory bulb, but not in the fetal brain. Expressed only in mature neurons, but not in undifferentiated neural stem precursor cells (NSPCs), nor in glioma cells.

The protein resides in the cytoplasm. It localises to the postsynaptic density. Functionally, acts as a guanine nucleotide exchange factor (GEF) for ARF1. This chain is IQ motif and SEC7 domain-containing protein 3 (IQSEC3), found in Homo sapiens (Human).